We begin with the raw amino-acid sequence, 1050 residues long: Integrin alpha-5 (1050 aa).

The signal sequence occupies residues 1–32 (MQLPRGSRVPGLVATFLFPVLCALLTFSSVRG). The Extracellular portion of the chain corresponds to 33–996 (FNLAVEQPAV…IHWAKPESSY (964 aa)). 7 FG-GAP repeats span residues 34-99 (NLAV…GTNC), 116-175 (DTPQ…NFTT), 183-235 (RTDF…QEAY), 249-301 (QTRQ…GTDL), 302-367 (RSLY…MEST), 368-426 (PHLI…GVDS), and 430-493 (QVLQ…ISPN). Asn-75, Asn-95, and Asn-98 each carry an N-linked (GlcNAc...) asparagine glycan. 2 disulfides stabilise this stretch: Cys-90/Cys-99 and Cys-145/Cys-166. An N-linked (GlcNAc...) asparagine glycan is attached at Asn-172. Cys-182 and Cys-195 are disulfide-bonded. Ca(2+) contacts are provided by Glu-270, Ser-272, Asp-274, Thr-276, and Asp-278. 3 N-linked (GlcNAc...) asparagine glycosylation sites follow: Asn-287, Asn-297, and Asn-306. Asp-324, Asn-326, Asp-328, Leu-330, Asp-332, Asp-390, Asp-392, Asp-394, Asp-398, Asp-454, Asp-456, Asn-458, Tyr-460, and Asp-462 together coordinate Ca(2+). Residues Cys-502 and Cys-513 are joined by a disulfide bond. Asn-507, Asn-515, Asn-521, and Asn-600 each carry an N-linked (GlcNAc...) asparagine glycan. The cysteines at positions 519 and 575 are disulfide-linked. A disulfide bridge connects residues Cys-636 and Cys-642. N-linked (GlcNAc...) asparagine glycosylation is found at Asn-649, Asn-714, Asn-763, and Asn-861. Cys-708 and Cys-721 are joined by a disulfide. Disulfide bonds link Cys-839–Cys-958, Cys-862–Cys-922, and Cys-910–Cys-917. Residues 997–1022 (GVPLWIIILAILIGLLLLALLIYVLY) form a helical membrane-spanning segment. Topologically, residues 1023-1050 (KLGFFKRSYQYGTAMEKAELKPQAASEA) are cytoplasmic. The GFFKR motif motif lies at 1025 to 1029 (GFFKR).

The protein belongs to the integrin alpha chain family. As to quaternary structure, heterodimer of an alpha and a beta subunit. The alpha subunit is composed of a heavy and a light chain linked by a disulfide bond. Alpha-5 associates with beta-1.

The protein localises to the cell membrane. Its subcellular location is the cell junction. It localises to the focal adhesion. Its function is as follows. Integrin alpha-5/beta-1 (ITGA5:ITGB1) is a receptor for fibronectin. It recognizes the sequence R-G-D in its ligands. ITGA5:ITGB1 acts as a receptor for fibrillin-1 (FBN1) and mediates R-G-D-dependent cell adhesion to FBN1. ITGA5:ITGB1 acts as a receptor for fibronectin (FN1) and mediates R-G-D-dependent cell adhesion to FN1. ITGA5:ITGB1 is a receptor for IL1B and binding is essential for IL1B signaling. ITGA5:ITGB3 is a receptor for soluble CD40LG and is required for CD40/CD40LG signaling. In Xenopus laevis (African clawed frog), this protein is Integrin alpha-5 (itga5).